We begin with the raw amino-acid sequence, 417 residues long: Gamma-glutamyl phosphate reductase (417 aa).

This sequence belongs to the gamma-glutamyl phosphate reductase family.

The protein localises to the cytoplasm. The enzyme catalyses L-glutamate 5-semialdehyde + phosphate + NADP(+) = L-glutamyl 5-phosphate + NADPH + H(+). It functions in the pathway amino-acid biosynthesis; L-proline biosynthesis; L-glutamate 5-semialdehyde from L-glutamate: step 2/2. In terms of biological role, catalyzes the NADPH-dependent reduction of L-glutamate 5-phosphate into L-glutamate 5-semialdehyde and phosphate. The product spontaneously undergoes cyclization to form 1-pyrroline-5-carboxylate. In Desulfitobacterium hafniense (strain Y51), this protein is Gamma-glutamyl phosphate reductase.